Reading from the N-terminus, the 200-residue chain is Large ribosomal subunit protein bL25 (200 aa).

It belongs to the bacterial ribosomal protein bL25 family. CTC subfamily. Part of the 50S ribosomal subunit; part of the 5S rRNA/L5/L18/L25 subcomplex. Contacts the 5S rRNA. Binds to the 5S rRNA independently of L5 and L18.

Functionally, this is one of the proteins that binds to the 5S RNA in the ribosome where it forms part of the central protuberance. This chain is Large ribosomal subunit protein bL25, found in Corynebacterium glutamicum (strain ATCC 13032 / DSM 20300 / JCM 1318 / BCRC 11384 / CCUG 27702 / LMG 3730 / NBRC 12168 / NCIMB 10025 / NRRL B-2784 / 534).